Reading from the N-terminus, the 302-residue chain is Aspartate carbamoyltransferase catalytic subunit (302 aa).

Residues Arg-51 and Thr-52 each contribute to the carbamoyl phosphate site. L-aspartate is bound at residue Lys-80. Arg-101, His-129, and Gln-132 together coordinate carbamoyl phosphate. 2 residues coordinate L-aspartate: Arg-162 and Arg-223. Positions 261 and 262 each coordinate carbamoyl phosphate.

This sequence belongs to the aspartate/ornithine carbamoyltransferase superfamily. ATCase family. In terms of assembly, heterododecamer (2C3:3R2) of six catalytic PyrB chains organized as two trimers (C3), and six regulatory PyrI chains organized as three dimers (R2).

The enzyme catalyses carbamoyl phosphate + L-aspartate = N-carbamoyl-L-aspartate + phosphate + H(+). The protein operates within pyrimidine metabolism; UMP biosynthesis via de novo pathway; (S)-dihydroorotate from bicarbonate: step 2/3. Functionally, catalyzes the condensation of carbamoyl phosphate and aspartate to form carbamoyl aspartate and inorganic phosphate, the committed step in the de novo pyrimidine nucleotide biosynthesis pathway. This chain is Aspartate carbamoyltransferase catalytic subunit, found in Chromobacterium violaceum (strain ATCC 12472 / DSM 30191 / JCM 1249 / CCUG 213 / NBRC 12614 / NCIMB 9131 / NCTC 9757 / MK).